Consider the following 697-residue polypeptide: Polyribonucleotide nucleotidyltransferase (697 aa).

Positions 484 and 490 each coordinate Mg(2+). The region spanning 551 to 610 (PRITTIWVKTDKIRDVIGSGGKNIRGITEATGVSIDIEDSGRINIASTSKEACDKAIKMI) is the KH domain. In terms of domain architecture, S1 motif spans 620–688 (GKLYMGTVKK…KQGKIKLSRK (69 aa)).

Belongs to the polyribonucleotide nucleotidyltransferase family. It depends on Mg(2+) as a cofactor.

It localises to the cytoplasm. It catalyses the reaction RNA(n+1) + phosphate = RNA(n) + a ribonucleoside 5'-diphosphate. Functionally, involved in mRNA degradation. Catalyzes the phosphorolysis of single-stranded polyribonucleotides processively in the 3'- to 5'-direction. This chain is Polyribonucleotide nucleotidyltransferase, found in Geobacter sulfurreducens (strain ATCC 51573 / DSM 12127 / PCA).